The following is a 332-amino-acid chain: Adenosine deaminase (332 aa).

Residues H12 and H14 each contribute to the Zn(2+) site. Residues H14, D16, and G170 each contribute to the substrate site. Residue H197 coordinates Zn(2+). The Proton donor role is filled by E200. D278 serves as a coordination point for Zn(2+). D279 is a binding site for substrate.

It belongs to the metallo-dependent hydrolases superfamily. Adenosine and AMP deaminases family. Adenosine deaminase subfamily. The cofactor is Zn(2+).

It catalyses the reaction adenosine + H2O + H(+) = inosine + NH4(+). It carries out the reaction 2'-deoxyadenosine + H2O + H(+) = 2'-deoxyinosine + NH4(+). Functionally, catalyzes the hydrolytic deamination of adenosine and 2-deoxyadenosine. The polypeptide is Adenosine deaminase (Serratia proteamaculans (strain 568)).